Reading from the N-terminus, the 92-residue chain is MLCAVYKSSRKADTYLFVNKRDCFDDVPQALLEMFGVPQLVMVFPIAKRESLGIADIQKVRAALEEKGFYLQIPPPQVNLLAEHRESLGIKD.

Residues 1–85 enclose the YcgL domain; that stretch reads MLCAVYKSSR…PQVNLLAEHR (85 aa).

The sequence is that of YcgL domain-containing protein Shewana3_2381 from Shewanella sp. (strain ANA-3).